The chain runs to 547 residues: Chaperonin GroEL (547 aa).

Residues Thr-30 to Pro-33, Lys-51, Asp-87 to Thr-91, Gly-415, Asn-479 to Ala-481, and Asp-495 each bind ATP.

It belongs to the chaperonin (HSP60) family. In terms of assembly, forms a cylinder of 14 subunits composed of two heptameric rings stacked back-to-back. Interacts with the co-chaperonin GroES.

The protein resides in the cytoplasm. The enzyme catalyses ATP + H2O + a folded polypeptide = ADP + phosphate + an unfolded polypeptide.. Functionally, together with its co-chaperonin GroES, plays an essential role in assisting protein folding. The GroEL-GroES system forms a nano-cage that allows encapsulation of the non-native substrate proteins and provides a physical environment optimized to promote and accelerate protein folding. This chain is Chaperonin GroEL, found in Cupriavidus pinatubonensis (strain JMP 134 / LMG 1197) (Cupriavidus necator (strain JMP 134)).